A 184-amino-acid chain; its full sequence is Female-specific protein transformer (184 aa).

Basic and acidic residues-rich tracts occupy residues 1–39 (MKMD…DSRK) and 49–58 (DEVREQDRIR). Disordered regions lie at residues 1–123 (MKMD…PKII) and 146–184 (YQRL…RPPY). Basic residues-rich tracts occupy residues 59 to 75 (SLRQ…RSRS) and 84 to 114 (SRHR…RSPH). Residues 150-159 (PRPPPFPPAP) are compositionally biased toward pro residues.

It is found in the nucleus speckle. Its function is as follows. Member of the regulatory pathway controlling female somatic sexual differentiation, regulated by Sxl. Activates dsx female-specific splicing by promoting the formation of a splicing enhancer complex which consists of tra, tra2 and sr proteins. In Drosophila simulans (Fruit fly), this protein is Female-specific protein transformer (tra).